Consider the following 347-residue polypeptide: Sensor protein VraS (347 aa).

A run of 2 helical transmembrane segments spans residues 13–33 (ILVY…VNII) and 43–63 (IFGI…CIIV). The Histidine kinase domain maps to 150-341 (RLARELHDSV…RIEVKAPLNK (192 aa)). A Phosphohistidine modification is found at histidine 156.

In terms of processing, autophosphorylated on His-156.

The protein localises to the cell membrane. The enzyme catalyses ATP + protein L-histidine = ADP + protein N-phospho-L-histidine.. Functionally, member of the two-component regulatory system PprA/PprB involved in biofilm formation by controlling the expression of many related genes including type IVb pili major subunit flp pilin, adhesin bapA or cupE fimbriae. Also modulates quorum-sensing signal production acting on both negative and positive modulators. Functions as a heme sensor histidine kinase which is autophosphorylated at a histidine residue and transfers its phosphate group to PprB. This is Sensor protein VraS (vraS) from Staphylococcus aureus (strain COL).